A 300-amino-acid chain; its full sequence is MDNVAIKGSLVAIVTPMHENGELDLERFQSLIDFHVTEGTDGIVVVGTTGESPTVDFEEHHLLIKTAVEQAAGRVPVIAGTGANSTREAIDLSIYAKNAGADASLSVVPYYNKPTQEGLYQHFRAVAEAVDIPQILYNVPGRTVADIANDTVLRLAQIPNIVGIKDATGDIGRGFDLLCRAPEDFAIYSGDDASALALLLLGGHGVISVTANVAPKLMHEMCIAAFAGDLAAARAANRKLLRLHLDLFIEANPIPVKWAVAQMGLIGEGLRLPLTPLSNRYHQTLREAMSEAGIDLAISV.

Thr49 lines the pyruvate pocket. The active-site Proton donor/acceptor is the Tyr137. Lys165 functions as the Schiff-base intermediate with substrate in the catalytic mechanism. Residue Ile207 participates in pyruvate binding.

It belongs to the DapA family. In terms of assembly, homotetramer; dimer of dimers.

The protein resides in the cytoplasm. It carries out the reaction L-aspartate 4-semialdehyde + pyruvate = (2S,4S)-4-hydroxy-2,3,4,5-tetrahydrodipicolinate + H2O + H(+). The protein operates within amino-acid biosynthesis; L-lysine biosynthesis via DAP pathway; (S)-tetrahydrodipicolinate from L-aspartate: step 3/4. Its function is as follows. Catalyzes the condensation of (S)-aspartate-beta-semialdehyde [(S)-ASA] and pyruvate to 4-hydroxy-tetrahydrodipicolinate (HTPA). The polypeptide is 4-hydroxy-tetrahydrodipicolinate synthase (Nitrosospira multiformis (strain ATCC 25196 / NCIMB 11849 / C 71)).